The sequence spans 238 residues: D/L-lactic acid transporter (238 aa).

The next 2 helical transmembrane spans lie at 2–22 and 39–59; these read VHQLIAEFMGTALMIIFGVGV and IFAITTWGFGISVALFIFGNV. The NPA 1 signature appears at 62–64; the sequence is NPA. 3 helical membrane passes run 80 to 100, 135 to 155, and 158 to 178; these read FIPYSVAEVLGGVVGSVIVWI, FFVELFDTFIFISGILAISEI, and PGIVPIGVGLLVWAIGMGLGG. An NPA 2 motif is present at residues 185 to 187; the sequence is NLA. Residues 211 to 231 form a helical membrane-spanning segment; sequence YGIIVPGIAPFVGAAIAAWFM.

The protein belongs to the MIP/aquaporin (TC 1.A.8) family.

Its subcellular location is the cell membrane. Transporter that facilitates the transmembrane diffusion of D/L-lactic acid. Is involved in the cellular racemization of lactate and lactate metabolism. The transported molecule is indeed lactic acid and not the lactate anion, in agreement with the assumption that, with very few exceptions, MIPs (major intrinsic proteins) only facilitate the transport of uncharged solutes. Also facilitates urea and H(2)O(2) diffusion across membranes, but is not permeable to water, glycerol and dihydroxyacetone. In Lactiplantibacillus plantarum (strain ATCC BAA-793 / NCIMB 8826 / WCFS1) (Lactobacillus plantarum), this protein is D/L-lactic acid transporter.